The following is a 114-amino-acid chain: Protein lin-52 homolog (114 aa).

Phosphoserine occurs at positions 26 and 51.

Belongs to the lin-52 family. Component of the DREAM complex (also named LINC complex) at least composed of E2F4, E2F5, LIN9, LIN37, LIN52, LIN54, MYBL1, MYBL2, RBL1, RBL2, RBBP4, TFDP1 and TFDP2. The complex exists in quiescent cells where it represses cell cycle-dependent genes. It dissociates in S phase when LIN9, LIN37, LIN52 and LIN54 form a subcomplex that binds to MYBL2.

This chain is Protein lin-52 homolog (LIN52), found in Pongo abelii (Sumatran orangutan).